A 381-amino-acid polypeptide reads, in one-letter code: Short-chain dehydrogenase anuD (381 aa).

Residues isoleucine 84, lysine 109, aspartate 133, asparagine 158, tyrosine 244, and lysine 248 each coordinate NADP(+). Tyrosine 244 acts as the Proton acceptor in catalysis. The active-site Proton donor is the tyrosine 244. Lysine 248 functions as the Lowers pKa of active site Tyr in the catalytic mechanism.

The protein belongs to the short-chain dehydrogenases/reductases (SDR) family.

Functionally, highly reducing polyketide synthase; part of the gene cluster that mediates the biosynthesis of annullatin D, an alkylated aromatic polyketide with a fused dihydrobenzofuran lactone ring system that exhibits potent agonistic activities toward the cannabinoid receptors. AnuD does not seem to play a role within the pathway. The annullatin backbone 2-hydroxymethyl-3-pentylphenol is assembled from one acetyl-CoA starter unit and 5 malonyl-CoA elongation units by cooperation of the highly reducing polyketide synthase anuA, the short-chain dehydrogenase anuB and the oxidoreductase anuC, before being hydroxylated at the C-5 alkyl chain by the cytochrome P450 monooxygenase anuE to form (8S)-annullatin E. The prenyltransferase anuH subsequently installs one isoprenyl group at the benzene ring to form (8S)-annullatin J. Enzymatic or nonenzymatic dihydro-benzofuran ring formation between the prenyl and the phenolic hydroxyl groups in (8S)-annullatin J results in two diastereomers (2S,9S)-annullatin H and compound 12. The intermediate (2S,9S)-annullatin H is then converted to (2S,9S)-annullatin D by the FAD-linked oxidoreductase anuG-catalyzed five-member lactone ring formation. The isomer 12 acts as a substrate for the short-chain dehydrogenase anuF and is oxidized to (2R)-annullatin F, which is subsequently acetylated by an acetyltransferase leading to (2R)-annullatin G formation. The remaining enzymes identified within the cluster, anuD, anuI and anuJ, seem not to be involved in annullatin biosynthesis. The polypeptide is Short-chain dehydrogenase anuD (Penicillium roqueforti (strain FM164)).